The following is a 347-amino-acid chain: NADH-ubiquinone oxidoreductase chain 2 (347 aa).

10 helical membrane-spanning segments follow: residues 3-23, 25-45, 66-86, 93-115, 149-169, 178-198, 201-221, 237-257, 274-294, and 325-345; these read PPILIIIMATIMTGTMIVMLS, HWLLIWIGFEMNMLAIIPILM, ASMLLMMGVTINLLYSGQWVI, IASIMMTTALTMKLGLSPFHFWV, INTNLLMLMALTSVLVGGWGG, IMAYSSIAHMGWMAAIITYNP, MILNLTLYILMTLSTFMLFML, FPLITSMILILMLSLGGLPPL, NMIIIPTLMAITALLNLYFYL, and LLPPLIITSTMLLPLTPMLSV.

This sequence belongs to the complex I subunit 2 family. As to quaternary structure, core subunit of respiratory chain NADH dehydrogenase (Complex I) which is composed of 45 different subunits. Interacts with TMEM242.

It is found in the mitochondrion inner membrane. The enzyme catalyses a ubiquinone + NADH + 5 H(+)(in) = a ubiquinol + NAD(+) + 4 H(+)(out). Core subunit of the mitochondrial membrane respiratory chain NADH dehydrogenase (Complex I) which catalyzes electron transfer from NADH through the respiratory chain, using ubiquinone as an electron acceptor. Essential for the catalytic activity and assembly of complex I. In Canis lupus (Gray wolf), this protein is NADH-ubiquinone oxidoreductase chain 2.